The chain runs to 250 residues: NH(3)-dependent NAD(+) synthetase (250 aa).

31–38 (GISGGIDS) serves as a coordination point for ATP. Residue D37 participates in Mg(2+) binding. R122 serves as a coordination point for deamido-NAD(+). T142 contacts ATP. Position 147 (E147) interacts with Mg(2+). Deamido-NAD(+) is bound by residues K155 and D162. ATP is bound by residues K171 and S193. 239–240 (HK) is a binding site for deamido-NAD(+).

The protein belongs to the NAD synthetase family. Homodimer.

It carries out the reaction deamido-NAD(+) + NH4(+) + ATP = AMP + diphosphate + NAD(+) + H(+). The protein operates within cofactor biosynthesis; NAD(+) biosynthesis; NAD(+) from deamido-NAD(+) (ammonia route): step 1/1. Its function is as follows. Catalyzes the ATP-dependent amidation of deamido-NAD to form NAD. Uses ammonia as a nitrogen source. In Alkaliphilus oremlandii (strain OhILAs) (Clostridium oremlandii (strain OhILAs)), this protein is NH(3)-dependent NAD(+) synthetase.